Consider the following 388-residue polypeptide: Serine/threonine-protein phosphatase sitA (388 aa).

The Mn(2+) site is built by Asp-67 and His-69. The tract at residues 86 to 146 is disordered; the sequence is PDGSEAEAPK…SQRDRSSSSG (61 aa). Mn(2+) is bound by residues Asp-161 and Asn-193. The active-site Proton donor is the His-194. Positions 243 and 317 each coordinate Mn(2+).

It belongs to the PPP phosphatase family. PP-6 (PP-V) subfamily. The cofactor is Mn(2+).

The catalysed reaction is O-phospho-L-threonyl-[protein] + H2O = L-threonyl-[protein] + phosphate. Protein phosphatase that acts as a modulator of pkcA/mpkA activity involved in the cell wall integrity pathway. Plays an important role in regulation of adhesion, cell wall integrity, biofilm formation, and virulence. In Aspergillus fumigatus (strain ATCC MYA-4609 / CBS 101355 / FGSC A1100 / Af293) (Neosartorya fumigata), this protein is Serine/threonine-protein phosphatase sitA.